A 252-amino-acid chain; its full sequence is Probable transcriptional regulatory protein RT0442 (252 aa).

Positions 1–22 (MSGHSKFKNIQHRKGAQDKKKS) are disordered.

It belongs to the TACO1 family.

The protein resides in the cytoplasm. The protein is Probable transcriptional regulatory protein RT0442 of Rickettsia typhi (strain ATCC VR-144 / Wilmington).